The sequence spans 320 residues: Acetyl-coenzyme A carboxylase carboxyl transferase subunit beta (320 aa).

One can recognise a CoA carboxyltransferase N-terminal domain in the interval 25–294 (LWRKCPECGT…AIVGDLPAPD (270 aa)). 4 residues coordinate Zn(2+): Cys29, Cys32, Cys48, and Cys51. The C4-type zinc finger occupies 29-51 (CPECGTMLFHRELSDNLFVCISC). Residues 290 to 320 (LPAPDPAPATPEPQKAAPSAPAQDKPGAGRS) form a disordered region.

It belongs to the AccD/PCCB family. In terms of assembly, acetyl-CoA carboxylase is a heterohexamer composed of biotin carboxyl carrier protein (AccB), biotin carboxylase (AccC) and two subunits each of ACCase subunit alpha (AccA) and ACCase subunit beta (AccD). It depends on Zn(2+) as a cofactor.

The protein localises to the cytoplasm. It carries out the reaction N(6)-carboxybiotinyl-L-lysyl-[protein] + acetyl-CoA = N(6)-biotinyl-L-lysyl-[protein] + malonyl-CoA. Its pathway is lipid metabolism; malonyl-CoA biosynthesis; malonyl-CoA from acetyl-CoA: step 1/1. In terms of biological role, component of the acetyl coenzyme A carboxylase (ACC) complex. Biotin carboxylase (BC) catalyzes the carboxylation of biotin on its carrier protein (BCCP) and then the CO(2) group is transferred by the transcarboxylase to acetyl-CoA to form malonyl-CoA. This Dinoroseobacter shibae (strain DSM 16493 / NCIMB 14021 / DFL 12) protein is Acetyl-coenzyme A carboxylase carboxyl transferase subunit beta.